A 430-amino-acid chain; its full sequence is Alpha-(1-&gt;3)-arabinofuranosyltransferase (430 aa).

Helical transmembrane passes span 26 to 46, 114 to 134, 136 to 156, 160 to 180, 194 to 214, 218 to 238, 276 to 296, 307 to 327, 352 to 372, and 381 to 401; these read APST…LSVI, WYIS…LRIF, YTLS…TESV, LVFT…FRWL, AIGL…LPVL, FYTL…AWPL, WLIL…LWLL, FWLL…LSLG, WPAW…LGHW, and YMKI…VLYF.

Belongs to the glycosyltransferase 87 family.

The protein localises to the cell membrane. The catalysed reaction is Adds an alpha-D-arabinofuranosyl group from trans,octacis-decaprenylphospho-beta-D-arabinofuranose at the 3-O-position of an alpha-(1-&gt;5)-arabinofuranan chain attached to a beta-(1-&gt;5)-galactofuranan chain.. It functions in the pathway cell wall biogenesis; cell wall polysaccharide biosynthesis. In terms of biological role, involved in the biosynthesis of the arabinogalactan (AG) region of the mycolylarabinogalactan-peptidoglycan (mAGP) complex, an essential component of the mycobacterial cell wall. Catalyzes the addition of an arabinofuranosyl (Araf) residue from the sugar donor beta-D-arabinofuranosyl-1-monophosphoryldecaprenol (DPA) on the C-3 of an alpha-(1-&gt;5)-linked Araf from the arabinan backbone of AG. This Mycolicibacterium smegmatis (strain ATCC 700084 / mc(2)155) (Mycobacterium smegmatis) protein is Alpha-(1-&gt;3)-arabinofuranosyltransferase (aftC).